Here is a 107-residue protein sequence, read N- to C-terminus: Ubiquitin-related modifier 1 (107 aa).

Gly-107 is modified (1-thioglycine). Gly-107 is covalently cross-linked (Glycyl lysine isopeptide (Gly-Lys) (interchain with K-? in acceptor proteins)).

It belongs to the URM1 family. Post-translationally, C-terminal thiocarboxylation occurs in 2 steps, it is first acyl-adenylated (-COAMP) via the hesA/moeB/thiF part of UBA4, then thiocarboxylated (-COSH) via the rhodanese domain of UBA4.

Its subcellular location is the cytoplasm. The protein operates within tRNA modification; 5-methoxycarbonylmethyl-2-thiouridine-tRNA biosynthesis. Acts as a sulfur carrier required for 2-thiolation of mcm(5)S(2)U at tRNA wobble positions of cytosolic tRNA(Lys), tRNA(Glu) and tRNA(Gln). Serves as sulfur donor in tRNA 2-thiolation reaction by being thiocarboxylated (-COSH) at its C-terminus by the MOCS3 homolog UBA4. The sulfur is then transferred to tRNA to form 2-thiolation of mcm(5)S(2)U. Prior mcm(5) tRNA modification by the elongator complex is required for 2-thiolation. Also acts as a ubiquitin-like protein (UBL) that is covalently conjugated via an isopeptide bond to lysine residues of target proteins such as AHP1. The thiocarboxylated form serves as substrate for conjugation and oxidative stress specifically induces the formation of UBL-protein conjugates. The protein is Ubiquitin-related modifier 1 of Mycosarcoma maydis (Corn smut fungus).